The chain runs to 495 residues: Loline biosynthesis cluster 1 transcription factor lolU1 (495 aa).

The protein localises to the nucleus. Its function is as follows. Transcriptional regulator that may regulate the expression of the loline biosynthesis cluster 1, one of the 2 clusters involved in the biosynthesis of loline alkaloids, potent insecticidal agents composed of a pyrrolizidine ring system and an uncommon ether bridge linking carbons 2 and 7. The protein is Loline biosynthesis cluster 1 transcription factor lolU1 of Epichloe uncinata (Endophyte fungus).